The sequence spans 122 residues: Large ribosomal subunit protein bL12 (122 aa).

This sequence belongs to the bacterial ribosomal protein bL12 family. Homodimer. Part of the ribosomal stalk of the 50S ribosomal subunit. Forms a multimeric L10(L12)X complex, where L10 forms an elongated spine to which 2 to 4 L12 dimers bind in a sequential fashion. Binds GTP-bound translation factors.

Its function is as follows. Forms part of the ribosomal stalk which helps the ribosome interact with GTP-bound translation factors. Is thus essential for accurate translation. The chain is Large ribosomal subunit protein bL12 from Flavobacterium psychrophilum (strain ATCC 49511 / DSM 21280 / CIP 103535 / JIP02/86).